A 33-amino-acid chain; its full sequence is Gastrin (33 aa).

The disordered stretch occupies residues 1 to 21 (ELEPQGPPHLGTDLSKKQGPW). Position 18 is a pyrrolidone carboxylic acid (glutamine 18). Tyrosine 28 is subject to Sulfotyrosine. At phenylalanine 33 the chain carries Phenylalanine amide.

It belongs to the gastrin/cholecystokinin family.

Its subcellular location is the secreted. In terms of biological role, gastrin stimulates the stomach mucosa to produce and secrete hydrochloric acid and the pancreas to secrete its digestive enzymes. It also stimulates smooth muscle contraction and increases blood circulation and water secretion in the stomach and intestine. The sequence is that of Gastrin (GAST) from Chinchilla chinchilla (Short-tailed chinchilla).